The following is a 62-amino-acid chain: Large ribosomal subunit protein bL32 (62 aa).

Residues 1-16 (MAVPKRKTSPSRRGMR) show a composition bias toward basic residues. The interval 1–44 (MAVPKRKTSPSRRGMRRSADALKAPTYVEDKDSGELRRPHHIDL) is disordered. Over residues 28–44 (VEDKDSGELRRPHHIDL) the composition is skewed to basic and acidic residues.

This sequence belongs to the bacterial ribosomal protein bL32 family.

The protein is Large ribosomal subunit protein bL32 of Methylorubrum extorquens (strain CM4 / NCIMB 13688) (Methylobacterium extorquens).